Here is a 220-residue protein sequence, read N- to C-terminus: uncharacterized protein (220 aa).

This is an uncharacterized protein from Methanocaldococcus jannaschii (strain ATCC 43067 / DSM 2661 / JAL-1 / JCM 10045 / NBRC 100440) (Methanococcus jannaschii).